The chain runs to 724 residues: Disks large homolog 4 (724 aa).

S-palmitoyl cysteine attachment occurs at residues Cys-3 and Cys-5. Positions 15 to 35 (QDEDTPPLEHSPAHLPNQANS) are disordered. 2 consecutive PDZ domains span residues 65–151 (EITL…VMRR) and 160–246 (EIKL…VAKP). Residues Ser-73 and Ser-142 each carry the phosphoserine modification. Tyr-240 carries the post-translational modification Phosphotyrosine. The residue at position 295 (Ser-295) is a Phosphoserine. The region spanning 313–393 (RIVIHRGSTG…QTVTIIAQYK (81 aa)) is the PDZ 3 domain. 2 positions are modified to phosphoserine: Ser-415 and Ser-418. Thr-420 is modified (phosphothreonine). Phosphoserine occurs at positions 422, 425, 449, and 480. In terms of domain architecture, SH3 spans 428–498 (KRGFYIRALF…PSKRRVERRE (71 aa)). In terms of domain architecture, Guanylate kinase-like spans 534–709 (ARPIIILGPT…IYHKVKRVIE (176 aa)). Tyr-580 bears the Phosphotyrosine mark. Ser-606 and Ser-654 each carry phosphoserine. Tyr-715 is subject to Phosphotyrosine.

The protein belongs to the MAGUK family. As to quaternary structure, interacts through its PDZ domains with ANO2 and NETO1. Interacts with KCNJ4. Interacts through its first two PDZ domains with GRIN2A, GRIN2B, GRIN2C and GRIN2D. Interacts with ERBB4. Interacts with KCNA1, KCNA2, KCNA3 and KCNA4. Interacts with LRRC4 and LRRC4B. Interacts with SYNGAP1. Interacts with ASIC3. Interacts with SEMA4C. Interacts with CXADR. Interacts with KCND2. Interacts (via first PDZ domain) with CRIPT. Interacts through its first PDZ domain with GRIK2 and KCNA4. Interacts through its second PDZ domain with the PDZ domain of NOS1 or the C-terminus of CAPON. Interacts through its third PDZ domain with NLGN1 and CRIPT, and probably with NLGN2 and NLGN3. Interacts through its guanylate kinase-like domain with DLGAP1/GKAP, DLGAP2, DLGAP3, DLGAP4, MAP1A, BEGAIN and SIPA1L1. Interacts through its guanylate kinase-like domain with KIF13B. Isoform 2 interacts through an L27 domain with HGS/HRS and the first L27 domain of CASK. Interacts with ANKS1B. Interacts with ADR1B. May interact with HTR2A. Interacts with ADAM22, KLHL17 and LGI1. Interacts with FRMPD4 (via C-terminus). Interacts with LRFN1 and LRFN2. Interacts with LRFN4. Interacts (via N-terminal tandem pair of PDZ domains) with GPER1 (via C-terminus tail motif); the interaction is direct and induces the increase of GPER1 protein levels residing at the plasma membrane surface in a estradiol-independent manner. Interacts (via N-terminus tandem pair of PDZ domains) with NOS1 (via N-terminal domain). Interacts with SHANK3. Interacts with GPR85. Interacts with CACNG2 and MPP2 (via the SH3-Guanylate kinase-like sub-module). Interacts with ADGRB1. Found in a complex with PRR7 and GRIN1. Interacts (via PDZ3 domain and to lesser degree via PDZ2 domain) with PRR7. Component of the postsynaptic hippocampal AMPA-type glutamate receptor (AMPAR) complex, at least composed of pore forming AMPAR subunits GRIA1, GRIA2 and GRIA3 and AMPAR auxiliary proteins SHISA6 and SHISA7. Interacts (via its first two PDZ domains) with SHISA6 and SHISA7 (via PDZ-binding motif); the interaction is direct. Interacts (via PDZ domain 2) with SEMA4F (via PDZ-binding motif); this interaction may promote translocation of DLG4/SAP90 to the membrane. Interacts with RPH3A and GRIN2A; this ternary complex regulates NMDA receptor composition at postsynaptic membranes. Interacts with ABR and BCR. Interacts with DGKI (via PDZ-binding motif); controls the localization of DGKI to the synapse. Interacts with C9orf72, SMCR8 and RAB39B. Interacts with ZDHHC5. Interacts with PTEN (via PDZ domain-binding motif); the interaction is induced by NMDA and is required for PTEN location at postsynaptic density. Found in a complex with GRIA1, GRIA2, GRIA3, GRIA4, CACNG8 and CNIH2. Interacts with FAM81A; the interaction facilitates condensate formation via liquid-liquid phase separation. Interacts with ADGRL3. Interacts with SORCS3. Palmitoylated. Palmitoylation is required for targeting to postsynaptic density, plasma membrane and synapses. Palmitoylation by ZDHHC2 occurs when the synaptic activity decreases and induces DLG4 synaptic clustering. Palmitoylation by ZDHHC15 regulates trafficking to the postsynaptic density and function in synaptogenesis. Palmitoylation may play a role in glutamate receptor GRIA1 synapse clustering. Depalmitoylated by ABHD17A and ABHD17B and to a lesser extent by ABHD17C, ABHD12, ABHD13, LYPLA1 and LYPLA2. Undergoes rapid synaptic palmitoylation/depalmitoylation cycle during neuronal development which slows down in mature neurons. In terms of processing, ubiquitinated by MDM2 in response to NMDA receptor activation, leading to proteasome-mediated degradation of DLG4 which is required for AMPA receptor endocytosis. Expressed in brain (at protein level). Detected in juxtaparanodal zones in the central nervous system and at nerve terminal plexuses of basket cells in the cerebellum. Expressed in cerebrum. Expressed in hippocampal neurons (at protein level). Isoform 1 and isoform 2: highly expressed in cerebellum, cortex, hippocampus, and corpus striatum.

The protein localises to the cell membrane. It localises to the postsynaptic density. The protein resides in the synapse. Its subcellular location is the cytoplasm. It is found in the cell projection. The protein localises to the axon. It localises to the dendritic spine. The protein resides in the dendrite. Its subcellular location is the presynapse. Postsynaptic scaffolding protein that plays a critical role in synaptogenesis and synaptic plasticity by providing a platform for the postsynaptic clustering of crucial synaptic proteins. Interacts with the cytoplasmic tail of NMDA receptor subunits and shaker-type potassium channels. Required for synaptic plasticity associated with NMDA receptor signaling. Overexpression or depletion of DLG4 changes the ratio of excitatory to inhibitory synapses in hippocampal neurons. May reduce the amplitude of ASIC3 acid-evoked currents by retaining the channel intracellularly. May regulate the intracellular trafficking of ADR1B. Also regulates AMPA-type glutamate receptor (AMPAR) immobilization at postsynaptic density keeping the channels in an activated state in the presence of glutamate and preventing synaptic depression. Under basal conditions, cooperates with FYN to stabilize palmitoyltransferase ZDHHC5 at the synaptic membrane through FYN-mediated phosphorylation of ZDHHC5 and its subsequent inhibition of association with endocytic proteins. This is Disks large homolog 4 from Rattus norvegicus (Rat).